We begin with the raw amino-acid sequence, 279 residues long: Pantothenate synthetase (279 aa).

An ATP-binding site is contributed by 31–38 (MGNLHGGH). His-38 serves as the catalytic Proton donor. Gln-62 is a binding site for (R)-pantoate. Gln-62 serves as a coordination point for beta-alanine. Position 150–153 (150–153 (GRKD)) interacts with ATP. Residue Gln-156 participates in (R)-pantoate binding. ATP contacts are provided by residues Val-179 and 187 to 190 (KSSR).

It belongs to the pantothenate synthetase family. In terms of assembly, homodimer.

It localises to the cytoplasm. The catalysed reaction is (R)-pantoate + beta-alanine + ATP = (R)-pantothenate + AMP + diphosphate + H(+). Its pathway is cofactor biosynthesis; (R)-pantothenate biosynthesis; (R)-pantothenate from (R)-pantoate and beta-alanine: step 1/1. Functionally, catalyzes the condensation of pantoate with beta-alanine in an ATP-dependent reaction via a pantoyl-adenylate intermediate. This is Pantothenate synthetase from Stenotrophomonas maltophilia (strain K279a).